Reading from the N-terminus, the 193-residue chain is Peptidyl-tRNA hydrolase (193 aa).

Tyr-18 provides a ligand contact to tRNA. Catalysis depends on His-23, which acts as the Proton acceptor. Residues Phe-69, Asn-71, and Asn-117 each coordinate tRNA.

The protein belongs to the PTH family. As to quaternary structure, monomer.

It is found in the cytoplasm. The enzyme catalyses an N-acyl-L-alpha-aminoacyl-tRNA + H2O = an N-acyl-L-amino acid + a tRNA + H(+). Its function is as follows. Hydrolyzes ribosome-free peptidyl-tRNAs (with 1 or more amino acids incorporated), which drop off the ribosome during protein synthesis, or as a result of ribosome stalling. Functionally, catalyzes the release of premature peptidyl moieties from peptidyl-tRNA molecules trapped in stalled 50S ribosomal subunits, and thus maintains levels of free tRNAs and 50S ribosomes. This Teredinibacter turnerae (strain ATCC 39867 / T7901) protein is Peptidyl-tRNA hydrolase.